A 250-amino-acid chain; its full sequence is Triosephosphate isomerase (250 aa).

A substrate-binding site is contributed by 9-11 (NWK). His-96 serves as the catalytic Electrophile. Glu-166 functions as the Proton acceptor in the catalytic mechanism. Substrate-binding positions include Gly-172, Ser-212, and 233–234 (GG).

It belongs to the triosephosphate isomerase family. As to quaternary structure, homodimer.

It is found in the cytoplasm. The enzyme catalyses D-glyceraldehyde 3-phosphate = dihydroxyacetone phosphate. It participates in carbohydrate biosynthesis; gluconeogenesis. The protein operates within carbohydrate degradation; glycolysis; D-glyceraldehyde 3-phosphate from glycerone phosphate: step 1/1. Its function is as follows. Involved in the gluconeogenesis. Catalyzes stereospecifically the conversion of dihydroxyacetone phosphate (DHAP) to D-glyceraldehyde-3-phosphate (G3P). The protein is Triosephosphate isomerase of Chlorobium phaeovibrioides (strain DSM 265 / 1930) (Prosthecochloris vibrioformis (strain DSM 265)).